We begin with the raw amino-acid sequence, 57 residues long: Ribulose bisphosphate carboxylase large chain (57 aa).

The propeptide occupies 1–2 (MS). N-acetylproline is present on P3. K14 carries the post-translational modification N6,N6,N6-trimethyllysine.

This sequence belongs to the RuBisCO large chain family. Type I subfamily. As to quaternary structure, heterohexadecamer of 8 large chains and 8 small chains.

The protein resides in the plastid. The protein localises to the chloroplast. It catalyses the reaction 2 (2R)-3-phosphoglycerate + 2 H(+) = D-ribulose 1,5-bisphosphate + CO2 + H2O. It carries out the reaction D-ribulose 1,5-bisphosphate + O2 = 2-phosphoglycolate + (2R)-3-phosphoglycerate + 2 H(+). Its function is as follows. RuBisCO catalyzes two reactions: the carboxylation of D-ribulose 1,5-bisphosphate, the primary event in carbon dioxide fixation, as well as the oxidative fragmentation of the pentose substrate in the photorespiration process. Both reactions occur simultaneously and in competition at the same active site. The protein is Ribulose bisphosphate carboxylase large chain (rbcL) of Buxus sempervirens (Common box).